Reading from the N-terminus, the 401-residue chain is MRCDRVWINARLATLAPGRQGLGIVEDGVVACLGGRIAYAGPAAAAPTFEAAESIDVDGRWITPGLIDPHTHLVFAGDRAHEFELRLAGASYEEIARAGGGIVSTMRATRAASEAELIAAALPRLDALLAEGVTTVEIKSGYGLSLDDELKSLRAARALADIRRVGVTTTFLGAHALPPEYRDDEDGYVDLVCQTMIPAIAARGLADAVDGFCEGIGFSPAQIRRVFDAAKAHGLPVKLHAEQLSNLSGAALAAEYNALSADHLEHLDAAGIAAMAASGTVATLLPGAYYFTRETLVPPIAALRAAGVPMALATDCNPGTSPLTSPLLVMNMAATLFRMTVEECLAGVTREAARALGLLADRGTLEAGKACDLAIWDVERPAELVYRMGFNPLHARVWRGL.

The Fe(3+) site is built by His70 and His72. Zn(2+) contacts are provided by His70 and His72. The 4-imidazolone-5-propanoate site is built by Arg79, Tyr142, and His175. Residue Tyr142 participates in N-formimidoyl-L-glutamate binding. His240 is a binding site for Fe(3+). His240 is a Zn(2+) binding site. Gln243 lines the 4-imidazolone-5-propanoate pocket. Position 315 (Asp315) interacts with Fe(3+). Asp315 serves as a coordination point for Zn(2+). N-formimidoyl-L-glutamate-binding residues include Asn317 and Gly319. Thr320 is a 4-imidazolone-5-propanoate binding site.

The protein belongs to the metallo-dependent hydrolases superfamily. HutI family. It depends on Zn(2+) as a cofactor. The cofactor is Fe(3+).

The protein localises to the cytoplasm. It catalyses the reaction 4-imidazolone-5-propanoate + H2O = N-formimidoyl-L-glutamate. Its pathway is amino-acid degradation; L-histidine degradation into L-glutamate; N-formimidoyl-L-glutamate from L-histidine: step 3/3. In terms of biological role, catalyzes the hydrolytic cleavage of the carbon-nitrogen bond in imidazolone-5-propanoate to yield N-formimidoyl-L-glutamate. It is the third step in the universal histidine degradation pathway. This chain is Imidazolonepropionase, found in Caulobacter vibrioides (strain ATCC 19089 / CIP 103742 / CB 15) (Caulobacter crescentus).